A 153-amino-acid polypeptide reads, in one-letter code: MSARISKQLRLSVPPCLANRTTASNSSSCVTEVEPLLQSFSSTLVLIVLATVIFCLVVLSLSTFHMHKSKMKKRKIEKAQEEYERDHCSPKAERGHLHGMGRGGTHGSPTSPTIQRKEHIRLDLGASVNEEPQLEASGLDRATEHLQQSVVLS.

The N-terminal stretch at 1-18 is a signal peptide; sequence MSARISKQLRLSVPPCLA. Asn19 and Asn25 each carry an N-linked (GlcNAc...) asparagine glycan. Topologically, residues 19–43 are extracellular; sequence NRTTASNSSSCVTEVEPLLQSFSST. A helical transmembrane segment spans residues 44–64; it reads LVLIVLATVIFCLVVLSLSTF. Topologically, residues 65-153 are cytoplasmic; that stretch reads HMHKSKMKKR…EHLQQSVVLS (89 aa). Residues 75 to 115 form a disordered region; the sequence is KIEKAQEEYERDHCSPKAERGHLHGMGRGGTHGSPTSPTIQ. Basic and acidic residues predominate over residues 77-96; sequence EKAQEEYERDHCSPKAERGH.

It localises to the membrane. This is an uncharacterized protein from Xenopus tropicalis (Western clawed frog).